The chain runs to 161 residues: 3-hydroxyacyl-[acyl-carrier-protein] dehydratase FabZ (161 aa).

His-66 is a catalytic residue.

Belongs to the thioester dehydratase family. FabZ subfamily.

Its subcellular location is the cytoplasm. It carries out the reaction a (3R)-hydroxyacyl-[ACP] = a (2E)-enoyl-[ACP] + H2O. Its function is as follows. Involved in unsaturated fatty acids biosynthesis. Catalyzes the dehydration of short chain beta-hydroxyacyl-ACPs and long chain saturated and unsaturated beta-hydroxyacyl-ACPs. The protein is 3-hydroxyacyl-[acyl-carrier-protein] dehydratase FabZ of Gluconacetobacter diazotrophicus (strain ATCC 49037 / DSM 5601 / CCUG 37298 / CIP 103539 / LMG 7603 / PAl5).